A 754-amino-acid chain; its full sequence is Carbon catabolite repressor protein 4 homolog 6 (754 aa).

2 disordered regions span residues 34–65 (PYRG…DQFV) and 85–176 (EPYR…KTPP). The span at 50 to 61 (FSDRPYNDDAGR) shows a compositional bias: basic and acidic residues. 2 stretches are compositionally biased toward polar residues: residues 96 to 106 (QRQQPPFNQNY) and 116 to 133 (GQWQ…NQNY). Residues 162-171 (KPSDYREWEY) are compositionally biased toward basic and acidic residues. E237 is a Mg(2+) binding site. Disordered regions lie at residues 404–431 (VSAE…QGQV) and 494–558 (IENR…DQDI). Polar residues-rich tracts occupy residues 415 to 431 (NYTT…QGQV), 503 to 525 (GNLS…QHAS), and 534 to 545 (DRSVSSGLSETE).

Belongs to the CCR4/nocturin family. In terms of assembly, component of the CCR4-NOT complex, at least composed of CRR4 and CAF1 proteins. Mg(2+) is required as a cofactor.

The protein localises to the nucleus. It localises to the cytoplasm. The enzyme catalyses Exonucleolytic cleavage of poly(A) to 5'-AMP.. Acts as a catalytic component of the CCR4-NOT core complex, which in the nucleus seems to be a general transcription factor, and in the cytoplasm the major mRNA deadenylase involved in mRNA turnover. The polypeptide is Carbon catabolite repressor protein 4 homolog 6 (CCR4-6) (Arabidopsis thaliana (Mouse-ear cress)).